A 396-amino-acid chain; its full sequence is S-adenosylmethionine synthase (396 aa).

ATP is bound at residue His-16. Asp-18 provides a ligand contact to Mg(2+). Residue Glu-44 coordinates K(+). Residues Glu-57 and Gln-100 each coordinate L-methionine. The flexible loop stretch occupies residues 100-110 (QSVDINQGVDR). ATP is bound by residues 165-167 (DAK), Asp-240, 246-247 (RK), Ala-263, and Lys-267. Asp-240 lines the L-methionine pocket. Position 271 (Lys-271) interacts with L-methionine.

It belongs to the AdoMet synthase family. In terms of assembly, homotetramer; dimer of dimers. Mg(2+) is required as a cofactor. The cofactor is K(+).

The protein resides in the cytoplasm. The enzyme catalyses L-methionine + ATP + H2O = S-adenosyl-L-methionine + phosphate + diphosphate. It participates in amino-acid biosynthesis; S-adenosyl-L-methionine biosynthesis; S-adenosyl-L-methionine from L-methionine: step 1/1. Functionally, catalyzes the formation of S-adenosylmethionine (AdoMet) from methionine and ATP. The overall synthetic reaction is composed of two sequential steps, AdoMet formation and the subsequent tripolyphosphate hydrolysis which occurs prior to release of AdoMet from the enzyme. The protein is S-adenosylmethionine synthase of Pseudomonas aeruginosa (strain UCBPP-PA14).